Here is a 107-residue protein sequence, read N- to C-terminus: Small integral membrane protein 19 (107 aa).

A helical transmembrane segment spans residues 25–43; sequence ATNVYLIVILVSFGLFMYA. The tract at residues 88–107 is disordered; that stretch reads RKYEYQQPQSQADSVQLSLE. Polar residues predominate over residues 93–107; that stretch reads QQPQSQADSVQLSLE.

It belongs to the SMIM19 family.

The protein resides in the membrane. The sequence is that of Small integral membrane protein 19 (Smim19) from Mus musculus (Mouse).